The primary structure comprises 260 residues: Phosphate import ATP-binding protein PstB 1 (260 aa).

The ABC transporter domain maps to 13-255 (ISARDLNVHY…PQHPLTQGYI (243 aa)). 45 to 52 (GPSGCGKS) provides a ligand contact to ATP.

Belongs to the ABC transporter superfamily. Phosphate importer (TC 3.A.1.7) family. The complex is composed of two ATP-binding proteins (PstB), two transmembrane proteins (PstC and PstA) and a solute-binding protein (PstS).

The protein resides in the cell inner membrane. It carries out the reaction phosphate(out) + ATP + H2O = ADP + 2 phosphate(in) + H(+). Part of the ABC transporter complex PstSACB involved in phosphate import. Responsible for energy coupling to the transport system. The protein is Phosphate import ATP-binding protein PstB 1 of Paramagnetospirillum magneticum (strain ATCC 700264 / AMB-1) (Magnetospirillum magneticum).